Reading from the N-terminus, the 201-residue chain is Holliday junction branch migration complex subunit RuvA (201 aa).

A domain I region spans residues 1–64; it reads MFNSISGILS…EDQMRLFGFP (64 aa). A domain II region spans residues 65-140; the sequence is NQAERSLFLD…KLTNLNEVSS (76 aa). Residues 140–144 are flexible linker; sequence SKGQA. The domain III stretch occupies residues 145 to 201; the sequence is SVSCEYEDIVTALTEMGFERKSVIVQVEKIAEEMKAAGSDPLKNEEELFRRSIVALS.

This sequence belongs to the RuvA family. As to quaternary structure, homotetramer. Forms an RuvA(8)-RuvB(12)-Holliday junction (HJ) complex. HJ DNA is sandwiched between 2 RuvA tetramers; dsDNA enters through RuvA and exits via RuvB. An RuvB hexamer assembles on each DNA strand where it exits the tetramer. Each RuvB hexamer is contacted by two RuvA subunits (via domain III) on 2 adjacent RuvB subunits; this complex drives branch migration. In the full resolvosome a probable DNA-RuvA(4)-RuvB(12)-RuvC(2) complex forms which resolves the HJ.

It is found in the cytoplasm. Functionally, the RuvA-RuvB-RuvC complex processes Holliday junction (HJ) DNA during genetic recombination and DNA repair, while the RuvA-RuvB complex plays an important role in the rescue of blocked DNA replication forks via replication fork reversal (RFR). RuvA specifically binds to HJ cruciform DNA, conferring on it an open structure. The RuvB hexamer acts as an ATP-dependent pump, pulling dsDNA into and through the RuvAB complex. HJ branch migration allows RuvC to scan DNA until it finds its consensus sequence, where it cleaves and resolves the cruciform DNA. The protein is Holliday junction branch migration complex subunit RuvA of Treponema denticola (strain ATCC 35405 / DSM 14222 / CIP 103919 / JCM 8153 / KCTC 15104).